A 412-amino-acid chain; its full sequence is Argininosuccinate synthase (412 aa).

Residues 15-23 (AYSGGLDTS) and Ala-42 each bind ATP. L-citrulline contacts are provided by Tyr-93 and Ser-98. Residue Gly-123 coordinates ATP. Positions 125, 129, and 130 each coordinate L-aspartate. Asn-129 provides a ligand contact to L-citrulline. Positions 133, 185, 194, 270, and 282 each coordinate L-citrulline.

This sequence belongs to the argininosuccinate synthase family. Type 1 subfamily. As to quaternary structure, homotetramer.

The protein localises to the cytoplasm. The enzyme catalyses L-citrulline + L-aspartate + ATP = 2-(N(omega)-L-arginino)succinate + AMP + diphosphate + H(+). It functions in the pathway amino-acid biosynthesis; L-arginine biosynthesis; L-arginine from L-ornithine and carbamoyl phosphate: step 2/3. The chain is Argininosuccinate synthase from Psychrobacter arcticus (strain DSM 17307 / VKM B-2377 / 273-4).